We begin with the raw amino-acid sequence, 192 residues long: Thymidine kinase (192 aa).

ATP is bound by residues 9-16 (SSMNAGKS) and 87-90 (DEAQ). The active-site Proton acceptor is Glu-88. Zn(2+)-binding residues include Cys-145, Cys-147, Cys-182, and His-185.

Belongs to the thymidine kinase family. As to quaternary structure, homotetramer.

It is found in the cytoplasm. It carries out the reaction thymidine + ATP = dTMP + ADP + H(+). In Colwellia psychrerythraea (strain 34H / ATCC BAA-681) (Vibrio psychroerythus), this protein is Thymidine kinase.